We begin with the raw amino-acid sequence, 185 residues long: Large ribosomal subunit protein uL22 (185 aa).

It belongs to the universal ribosomal protein uL22 family. Part of the 50S ribosomal subunit.

Its function is as follows. This protein binds specifically to 23S rRNA. It makes multiple contacts with different domains of the 23S rRNA in the assembled 50S subunit and ribosome. Functionally, the globular domain of the protein is located near the polypeptide exit tunnel on the outside of the subunit, while an extended beta-hairpin is found that lines the wall of the exit tunnel in the center of the 70S ribosome. In Pyrobaculum islandicum (strain DSM 4184 / JCM 9189 / GEO3), this protein is Large ribosomal subunit protein uL22.